The following is a 65-amino-acid chain: Probable movement protein p8 (65 aa).

The segment covering 1 to 10 has biased composition (polar residues); it reads MENTENVRSG. Residues 1 to 47 are disordered; that stretch reads MENTENVRSGRNQREYSKERQQEGGYKEVSKAAVRKEGDVKQDMGPS. Over residues 12–42 the composition is skewed to basic and acidic residues; sequence NQREYSKERQQEGGYKEVSKAAVRKEGDVKQ.

This sequence belongs to the carmovirus/necrovirus/panicovirus movement protein p8 family.

Its function is as follows. Cell-to-cell movement. This Tobacco necrosis virus (strain D) (TNV-D) protein is Probable movement protein p8.